We begin with the raw amino-acid sequence, 133 residues long: Hemiptericin (133 aa).

Antibacterial peptide. Affects Gram-negative bacteria. This chain is Hemiptericin, found in Pyrrhocoris apterus (Sap sucking bug).